Here is a 115-residue protein sequence, read N- to C-terminus: Aspartate 1-decarboxylase (115 aa).

Ser24 serves as the catalytic Schiff-base intermediate with substrate; via pyruvic acid. The residue at position 24 (Ser24) is a Pyruvic acid (Ser). Thr56 serves as a coordination point for substrate. Tyr57 acts as the Proton donor in catalysis. 72–74 (GAA) is a substrate binding site.

The protein belongs to the PanD family. In terms of assembly, heterooctamer of four alpha and four beta subunits. The cofactor is pyruvate. Is synthesized initially as an inactive proenzyme, which is activated by self-cleavage at a specific serine bond to produce a beta-subunit with a hydroxyl group at its C-terminus and an alpha-subunit with a pyruvoyl group at its N-terminus.

It localises to the cytoplasm. The enzyme catalyses L-aspartate + H(+) = beta-alanine + CO2. Its pathway is cofactor biosynthesis; (R)-pantothenate biosynthesis; beta-alanine from L-aspartate: step 1/1. In terms of biological role, catalyzes the pyruvoyl-dependent decarboxylation of aspartate to produce beta-alanine. The chain is Aspartate 1-decarboxylase from Pseudothermotoga lettingae (strain ATCC BAA-301 / DSM 14385 / NBRC 107922 / TMO) (Thermotoga lettingae).